Consider the following 364-residue polypeptide: Methylthioribose-1-phosphate isomerase (364 aa).

Residues Arg-53–Ala-55, Arg-90, and Gln-203 contribute to the substrate site. Asp-244 (proton donor) is an active-site residue. Residue Asn-254 to Lys-255 coordinates substrate.

This sequence belongs to the eIF-2B alpha/beta/delta subunits family. MtnA subfamily.

The enzyme catalyses 5-(methylsulfanyl)-alpha-D-ribose 1-phosphate = 5-(methylsulfanyl)-D-ribulose 1-phosphate. The protein operates within amino-acid biosynthesis; L-methionine biosynthesis via salvage pathway; L-methionine from S-methyl-5-thio-alpha-D-ribose 1-phosphate: step 1/6. In terms of biological role, catalyzes the interconversion of methylthioribose-1-phosphate (MTR-1-P) into methylthioribulose-1-phosphate (MTRu-1-P). The protein is Methylthioribose-1-phosphate isomerase of Rhizobium meliloti (strain 1021) (Ensifer meliloti).